Here is a 75-residue protein sequence, read N- to C-terminus: uncharacterized protein (75 aa).

The helical transmembrane segment at 7–26 threads the bilayer; sequence ATAPLFVIVGLAVVLTGATG.

Its subcellular location is the membrane. This is an uncharacterized protein from Dictyostelium discoideum (Social amoeba).